Reading from the N-terminus, the 502-residue chain is Smr domain-containing protein C1235.03 (502 aa).

The disordered stretch occupies residues 150 to 184 (LITSNIGHRSRQRKKKTKKATNSRKPLSKFQSNTE). A compositionally biased stretch (basic residues) spans 157–171 (HRSRQRKKKTKKATN). The Smr domain occupies 411 to 459 (SLDLHGATVREAKTIVRERVAAWWAKEADTSPNSIRPFVIVTGRGNHSI).

The protein resides in the nucleus. Its subcellular location is the nucleolus. The polypeptide is Smr domain-containing protein C1235.03 (Schizosaccharomyces pombe (strain 972 / ATCC 24843) (Fission yeast)).